A 463-amino-acid chain; its full sequence is Succinate--CoA ligase [ADP-forming] subunit beta, mitochondrial (463 aa).

The N-terminal 53 residues, 1–53 (MAASVFYGRLLAVATLRNHRPRTALGAAAQVLGSSGLFNNHGLQVQQQQQRNL), are a transit peptide targeting the mitochondrion. Residues 61 to 288 (MELLQEAGVS…SNSAYRQKKI (228 aa)) enclose the ATP-grasp domain. N6-acetyllysine is present on Lys78. Position 84 is a phosphotyrosine (Tyr84). Lys88 carries the N6-acetyllysine; alternate modification. At Lys88 the chain carries N6-succinyllysine; alternate. ATP is bound by residues Lys98 and 105 to 107 (GRG). Residues Lys129, Lys139, Lys143, and Lys216 each carry the N6-acetyllysine modification. Asn258 and Asp272 together coordinate Mg(2+). The residue at position 279 (Ser279) is a Phosphoserine. Substrate is bound at residue Asn323. Position 341 is a phosphothreonine (Thr341). Residue Lys368 is modified to N6-acetyllysine. Position 380-382 (380-382 (GIM)) interacts with substrate.

This sequence belongs to the succinate/malate CoA ligase beta subunit family. ATP-specific subunit beta subfamily. In terms of assembly, heterodimer of an alpha and a beta subunit. The beta subunit determines specificity for ATP. Interacts with ALAS2. It depends on Mg(2+) as a cofactor.

Its subcellular location is the mitochondrion. The catalysed reaction is succinate + ATP + CoA = succinyl-CoA + ADP + phosphate. It participates in carbohydrate metabolism; tricarboxylic acid cycle; succinate from succinyl-CoA (ligase route): step 1/1. In terms of biological role, ATP-specific succinyl-CoA synthetase functions in the citric acid cycle (TCA), coupling the hydrolysis of succinyl-CoA to the synthesis of ATP and thus represents the only step of substrate-level phosphorylation in the TCA. The beta subunit provides nucleotide specificity of the enzyme and binds the substrate succinate, while the binding sites for coenzyme A and phosphate are found in the alpha subunit. The protein is Succinate--CoA ligase [ADP-forming] subunit beta, mitochondrial of Macaca fascicularis (Crab-eating macaque).